Consider the following 506-residue polypeptide: Pentatricopeptide repeat-containing protein At5g18475 (506 aa).

Residues 28–48 form a disordered region; sequence SEKKKKPSPPPESSISPVETN. PPR repeat units lie at residues 88–122, 123–158, 159–194, 195–229, 231–266, 267–301, 302–336, 337–371, 372–406, 407–441, 442–476, and 477–506; these read NNAT…TCRF, QESL…RVKP, SLNA…GLQP, NTCI…GISY, NSIT…GISP, DPVT…GCNP, NVYN…GLKL, DTVG…RCRA, DTLT…GVHL, NKGS…GIWP, HHAT…GLIP, and GPKS…SLVS.

This sequence belongs to the PPR family. P subfamily.

The chain is Pentatricopeptide repeat-containing protein At5g18475 from Arabidopsis thaliana (Mouse-ear cress).